Here is a 300-residue protein sequence, read N- to C-terminus: Cation-efflux pump FieF (300 aa).

4 consecutive transmembrane segments (helical) span residues 12–32 (AAIA…FAWW), 39–59 (ILAA…NLLV), 82–102 (AALA…LTGI), and 114–134 (PGVG…LVSF). The Zn(2+) site is built by aspartate 45 and aspartate 49. Residues histidine 153 and aspartate 157 each contribute to the Zn(2+) site. Transmembrane regions (helical) follow at residues 156–176 (SDVM…YGWH) and 178–198 (ADAL…LRMG).

This sequence belongs to the cation diffusion facilitator (CDF) transporter (TC 2.A.4) family. FieF subfamily. Homodimer.

It is found in the cell inner membrane. It catalyses the reaction Zn(2+)(in) + H(+)(out) = Zn(2+)(out) + H(+)(in). It carries out the reaction Cd(2+)(in) + H(+)(out) = Cd(2+)(out) + H(+)(in). The enzyme catalyses Fe(2+)(in) + H(+)(out) = Fe(2+)(out) + H(+)(in). Functionally, divalent metal cation transporter which exports Zn(2+), Cd(2+) and possibly Fe(2+). May be involved in zinc and iron detoxification by efflux. This Escherichia coli O127:H6 (strain E2348/69 / EPEC) protein is Cation-efflux pump FieF.